Here is a 757-residue protein sequence, read N- to C-terminus: Endonuclease MutS2 (757 aa).

321–328 (GPNMGGKT) is a binding site for ATP. The Smr domain occupies 681-756 (IDIRGMTVEE…GTGVTVVEVK (76 aa)).

This sequence belongs to the DNA mismatch repair MutS family. MutS2 subfamily. As to quaternary structure, homodimer. Binds to stalled ribosomes, contacting rRNA.

Its function is as follows. Endonuclease that is involved in the suppression of homologous recombination and thus may have a key role in the control of bacterial genetic diversity. Acts as a ribosome collision sensor, splitting the ribosome into its 2 subunits. Detects stalled/collided 70S ribosomes which it binds and splits by an ATP-hydrolysis driven conformational change. Acts upstream of the ribosome quality control system (RQC), a ribosome-associated complex that mediates the extraction of incompletely synthesized nascent chains from stalled ribosomes and their subsequent degradation. Probably generates substrates for RQC. The polypeptide is Endonuclease MutS2 (Thermotoga petrophila (strain ATCC BAA-488 / DSM 13995 / JCM 10881 / RKU-1)).